The following is a 346-amino-acid chain: 4-hydroxy-2-oxovalerate aldolase (346 aa).

The region spanning Val8 to Met260 is the Pyruvate carboxyltransferase domain. Position 16–17 (Arg16–Asp17) interacts with substrate. Asp17 provides a ligand contact to Mn(2+). The Proton acceptor role is filled by His20. Substrate-binding residues include Ser170 and His199. Mn(2+) contacts are provided by His199 and His201. Residue Tyr290 coordinates substrate.

It belongs to the 4-hydroxy-2-oxovalerate aldolase family.

The enzyme catalyses (S)-4-hydroxy-2-oxopentanoate = acetaldehyde + pyruvate. Its pathway is aromatic compound metabolism; naphthalene degradation. In Pseudomonas putida (Arthrobacter siderocapsulatus), this protein is 4-hydroxy-2-oxovalerate aldolase (nahM).